We begin with the raw amino-acid sequence, 555 residues long: MTKVVGMATVLGPRPPQESMGPSPIKVEEDEEKDKCCPTLELSHKHFRQSGNQDTLEPMGPSTIKAEEDESKDKCRPNLEISRKSFKQFGYQDTLEQLGPSTIKAEEDDEKDKGHPSPEISRQRFRQFGYHDTPGPREALSQLRVLCCEWLQPEIHTKEQILELLVLEQFLTILPRELQTWVQQHCPESAEEAVTLLEDLEQELDEPGLQVSSPPNEQKQSWEKMSTSGTAMESLSSTETQHVDASPKYEFWGPLYIQETGEEEVFTQDPRKRQGFKSNPQKEDSADEHRSSEEESHADGLKRTVIPMIPANKYGSRSERQWANNLERERGTKASLQDTGSRKGAEPASTRPAPGEKRYICAECGKAFSNSSNLTKHRRTHTGEKPYVCTKCGKAFSHSSNLTLHYRTHLVDRPYDCKCGKAFGQSSDLLKHQRMHTEEAPYQCKDCGKAFSGKGSLIRHYRIHTGEKPYQCNECGKSFSQHAGLSSHQRLHTGEKPYKCKECGKAFNHSSNFNKHHRIHTGEKPYWCSHCGKTFCSKSNLSKHQRVHTGEGEVQ.

4 disordered regions span residues 1-74 (MTKV…SKDK), 102-133 (TIKA…YHDT), 204-243 (LDEP…TQHV), and 263-354 (EEVF…RPAP). Tandem repeats lie at residues 18–56 (ESMG…QDTL), 57–95 (EPMG…QDTL), and 96–134 (EQLG…HDTP). The 3 X 39 AA approximate tandem repeats stretch occupies residues 18 to 134 (ESMGPSPIKV…FRQFGYHDTP (117 aa)). Residue K26 forms a Glycyl lysine isopeptide (Lys-Gly) (interchain with G-Cter in SUMO2) linkage. One can recognise an SCAN box domain in the interval 122–204 (RQRFRQFGYH…TLLEDLEQEL (83 aa)). Positions 210-240 (QVSSPPNEQKQSWEKMSTSGTAMESLSSTET) are enriched in polar residues. The segment covering 280–302 (PQKEDSADEHRSSEEESHADGLK) has biased composition (basic and acidic residues). Residues K302 and K313 each participate in a glycyl lysine isopeptide (Lys-Gly) (interchain with G-Cter in SUMO2) cross-link. Positions 316–332 (SRSERQWANNLERERGT) are enriched in basic and acidic residues. C2H2-type zinc fingers lie at residues 359–381 (YICA…RRTH), 387–409 (YVCT…YRTH), 415–436 (YDCK…QRMH), 442–464 (YQCK…YRIH), 470–492 (YQCN…QRLH), 498–520 (YKCK…HRIH), and 526–548 (YWCS…QRVH). K431 participates in a covalent cross-link: Glycyl lysine isopeptide (Lys-Gly) (interchain with G-Cter in SUMO2).

It belongs to the krueppel C2H2-type zinc-finger protein family. In terms of tissue distribution, expressed predominantly in the spermatocytes and spermatids of adult testes. It is also present at lower levels in the ovary, brain, spleen, embryo and fetus.

Its subcellular location is the nucleus. Strong transcriptional activator. Plays an important role in spermatogenesis; essential for the progression of meiotic prophase I in spermatocytes. This Mus musculus (Mouse) protein is Zinc finger and SCAN domain-containing protein 21 (Zscan21).